The chain runs to 128 residues: Holo-[acyl-carrier-protein] synthase (128 aa).

Positions 8 and 57 each coordinate Mg(2+).

This sequence belongs to the P-Pant transferase superfamily. AcpS family. Mg(2+) is required as a cofactor.

The protein localises to the cytoplasm. The catalysed reaction is apo-[ACP] + CoA = holo-[ACP] + adenosine 3',5'-bisphosphate + H(+). Functionally, transfers the 4'-phosphopantetheine moiety from coenzyme A to a Ser of acyl-carrier-protein. This Syntrophus aciditrophicus (strain SB) protein is Holo-[acyl-carrier-protein] synthase.